The sequence spans 145 residues: MDIHEILNYLPHRYPFVLVDRVLSLELNKEIVAVKNVTINEPFFPGHFPYHPVMPGVLIVEALAQAAAILSFKTMGTKPNDKSVYYFAGMDNVRFKKPVSPGDQLILKVSIDRILRGIWRYKGEALVDGAVVAEAEMMCILKAID.

H47 is an active-site residue.

This sequence belongs to the thioester dehydratase family. FabZ subfamily.

It localises to the cytoplasm. It carries out the reaction a (3R)-hydroxyacyl-[ACP] = a (2E)-enoyl-[ACP] + H2O. Its function is as follows. Involved in unsaturated fatty acids biosynthesis. Catalyzes the dehydration of short chain beta-hydroxyacyl-ACPs and long chain saturated and unsaturated beta-hydroxyacyl-ACPs. The protein is 3-hydroxyacyl-[acyl-carrier-protein] dehydratase FabZ of Methylobacillus flagellatus (strain ATCC 51484 / DSM 6875 / VKM B-1610 / KT).